Reading from the N-terminus, the 123-residue chain is Small ribosomal subunit protein uS12 (123 aa).

Asp-89 bears the 3-methylthioaspartic acid mark. The disordered stretch occupies residues 103–123 (DTSGVQDRRQGRSKYGAKRPK). The segment covering 113–123 (GRSKYGAKRPK) has biased composition (basic residues).

The protein belongs to the universal ribosomal protein uS12 family. As to quaternary structure, part of the 30S ribosomal subunit. Contacts proteins S8 and S17. May interact with IF1 in the 30S initiation complex.

With S4 and S5 plays an important role in translational accuracy. In terms of biological role, interacts with and stabilizes bases of the 16S rRNA that are involved in tRNA selection in the A site and with the mRNA backbone. Located at the interface of the 30S and 50S subunits, it traverses the body of the 30S subunit contacting proteins on the other side and probably holding the rRNA structure together. The combined cluster of proteins S8, S12 and S17 appears to hold together the shoulder and platform of the 30S subunit. This Nitratidesulfovibrio vulgaris (strain ATCC 29579 / DSM 644 / CCUG 34227 / NCIMB 8303 / VKM B-1760 / Hildenborough) (Desulfovibrio vulgaris) protein is Small ribosomal subunit protein uS12.